A 208-amino-acid chain; its full sequence is dITP/XTP pyrophosphatase (208 aa).

11–16 (TGNAKK) provides a ligand contact to substrate. The active-site Proton acceptor is D73. D73 serves as a coordination point for Mg(2+). Substrate is bound by residues S74, 157-160 (FGYD), K180, and 185-186 (HR).

This sequence belongs to the HAM1 NTPase family. Homodimer. It depends on Mg(2+) as a cofactor.

It catalyses the reaction XTP + H2O = XMP + diphosphate + H(+). The enzyme catalyses dITP + H2O = dIMP + diphosphate + H(+). The catalysed reaction is ITP + H2O = IMP + diphosphate + H(+). Functionally, pyrophosphatase that catalyzes the hydrolysis of nucleoside triphosphates to their monophosphate derivatives, with a high preference for the non-canonical purine nucleotides XTP (xanthosine triphosphate), dITP (deoxyinosine triphosphate) and ITP. Seems to function as a house-cleaning enzyme that removes non-canonical purine nucleotides from the nucleotide pool, thus preventing their incorporation into DNA/RNA and avoiding chromosomal lesions. The sequence is that of dITP/XTP pyrophosphatase from Rhodopirellula baltica (strain DSM 10527 / NCIMB 13988 / SH1).